A 157-amino-acid polypeptide reads, in one-letter code: Stalk-specific protein B (157 aa).

A signal peptide spans 1–19; sequence MRSILILLSLLLTIAFASA.

The protein resides in the secreted. This chain is Stalk-specific protein B (staB), found in Dictyostelium discoideum (Social amoeba).